Reading from the N-terminus, the 84-residue chain is DNA-directed RNA polymerase subunit Rpo5 (84 aa).

This sequence belongs to the archaeal Rpo5/eukaryotic RPB5 RNA polymerase subunit family. In terms of assembly, part of the RNA polymerase complex.

It is found in the cytoplasm. It catalyses the reaction RNA(n) + a ribonucleoside 5'-triphosphate = RNA(n+1) + diphosphate. DNA-dependent RNA polymerase (RNAP) catalyzes the transcription of DNA into RNA using the four ribonucleoside triphosphates as substrates. The chain is DNA-directed RNA polymerase subunit Rpo5 from Saccharolobus islandicus (strain Y.N.15.51 / Yellowstone #2) (Sulfolobus islandicus).